A 224-amino-acid chain; its full sequence is Uracil-DNA glycosylase (224 aa).

Residue Asp62 is the Proton acceptor of the active site.

It belongs to the uracil-DNA glycosylase (UDG) superfamily. UNG family.

It localises to the cytoplasm. The enzyme catalyses Hydrolyzes single-stranded DNA or mismatched double-stranded DNA and polynucleotides, releasing free uracil.. Functionally, excises uracil residues from the DNA which can arise as a result of misincorporation of dUMP residues by DNA polymerase or due to deamination of cytosine. The sequence is that of Uracil-DNA glycosylase from Aliivibrio salmonicida (strain LFI1238) (Vibrio salmonicida (strain LFI1238)).